Here is a 196-residue protein sequence, read N- to C-terminus: DnaA initiator-associating protein DiaA (196 aa).

Residues 34 to 196 (LVQSLLNGNK…DSTLFPHQDE (163 aa)) enclose the SIS domain.

The protein belongs to the SIS family. DiaA subfamily. Homotetramer; dimer of dimers.

Its function is as follows. Required for the timely initiation of chromosomal replication via direct interactions with the DnaA initiator protein. The protein is DnaA initiator-associating protein DiaA of Serratia proteamaculans (strain 568).